Consider the following 346-residue polypeptide: Endo-1,4-beta-xylanase B (346 aa).

A signal peptide spans 1-19 (MKGLPALLLLLIGCVSSFG). Residues 41 to 338 (GNNFWSLPDA…KPCYFAIREL (298 aa)) enclose the GH10 domain. Glutamate 153 serves as the catalytic Proton donor. Residue glutamate 259 is the Nucleophile of the active site.

The protein belongs to the glycosyl hydrolase 10 (cellulase F) family.

It carries out the reaction Endohydrolysis of (1-&gt;4)-beta-D-xylosidic linkages in xylans.. In Thermotoga neapolitana, this protein is Endo-1,4-beta-xylanase B (xynB).